The sequence spans 32 residues: Jingzhaotoxin F4-32.60 (32 aa).

3 cysteine pairs are disulfide-bonded: C2-C17, C9-C22, and C16-C29. At D31 the chain carries Aspartic acid 1-amide.

The protein belongs to the neurotoxin 10 (Hwtx-1) family. 30 (Jztx-14) subfamily. Amidated as well as non-amidated forms are found in the venom. Expressed by the venom gland.

Its subcellular location is the secreted. Functionally, probable ion channel inhibitor. The protein is Jingzhaotoxin F4-32.60 of Chilobrachys guangxiensis (Chinese earth tiger tarantula).